A 174-amino-acid polypeptide reads, in one-letter code: Ribosome maturation factor RimM (174 aa).

Residues 97 to 169 (PDTYYDHQLE…ILEIDPPDGL (73 aa)) enclose the PRC barrel domain.

This sequence belongs to the RimM family. In terms of assembly, binds ribosomal protein uS19.

The protein localises to the cytoplasm. An accessory protein needed during the final step in the assembly of 30S ribosomal subunit, possibly for assembly of the head region. Essential for efficient processing of 16S rRNA. May be needed both before and after RbfA during the maturation of 16S rRNA. It has affinity for free ribosomal 30S subunits but not for 70S ribosomes. In Mycobacterium ulcerans (strain Agy99), this protein is Ribosome maturation factor RimM.